Reading from the N-terminus, the 273-residue chain is Cytochrome b-c1 complex subunit Rieske, mitochondrial (273 aa).

The transit peptide at 1-61 directs the protein to the mitochondrion; it reads MLRVAGRRLS…PFFVASRGFS (61 aa). Residues 25–46 are disordered; the sequence is PLAGAGVPDRDDDSARGRSQPR. The Mitochondrial matrix portion of the chain corresponds to 62-110; sequence STETVVPRNQDAGLADLPATVAAVKNPNPKVVYDEYNHERYPPGDPSKR. The chain crosses the membrane as a helical span at residues 111–133; that stretch reads AFAYFVLSGGRFIYASLLRLLVL. The Mitochondrial intermembrane segment spans residues 134–273; sequence KFVLSMSASK…FLEENKLLVG (140 aa). The Rieske domain maps to 176-271; the sequence is RRRTEDDIKL…YSFLEENKLL (96 aa). 4 residues coordinate [2Fe-2S] cluster: Cys216, His218, Cys235, and His238. A disulfide bridge links Cys221 with Cys237.

This sequence belongs to the Rieske iron-sulfur protein family. As to quaternary structure, component of the ubiquinol-cytochrome c oxidoreductase (cytochrome b-c1 complex, complex III, CIII), a multisubunit enzyme composed of 3 respiratory subunits cytochrome b, cytochrome c1 and Rieske protein, 2 core protein subunits, and several low-molecular weight protein subunits. The complex exists as an obligatory dimer and forms supercomplexes (SCs) in the inner mitochondrial membrane with cytochrome c oxidase (complex IV, CIV). [2Fe-2S] cluster serves as cofactor.

It localises to the mitochondrion inner membrane. The catalysed reaction is a quinol + 2 Fe(III)-[cytochrome c](out) = a quinone + 2 Fe(II)-[cytochrome c](out) + 2 H(+)(out). Component of the ubiquinol-cytochrome c oxidoreductase, a multisubunit transmembrane complex that is part of the mitochondrial electron transport chain which drives oxidative phosphorylation. The respiratory chain contains 3 multisubunit complexes succinate dehydrogenase (complex II, CII), ubiquinol-cytochrome c oxidoreductase (cytochrome b-c1 complex, complex III, CIII) and cytochrome c oxidase (complex IV, CIV), that cooperate to transfer electrons derived from NADH and succinate to molecular oxygen, creating an electrochemical gradient over the inner membrane that drives transmembrane transport and the ATP synthase. The cytochrome b-c1 complex catalyzes electron transfer from ubiquinol to cytochrome c, linking this redox reaction to translocation of protons across the mitochondrial inner membrane, with protons being carried across the membrane as hydrogens on the quinol. In the process called Q cycle, 2 protons are consumed from the matrix, 4 protons are released into the intermembrane space and 2 electrons are passed to cytochrome c. The Rieske protein is a catalytic core subunit containing a [2Fe-2S] iron-sulfur cluster. It cycles between 2 conformational states during catalysis to transfer electrons from the quinol bound in the Q(0) site in cytochrome b to cytochrome c1. The chain is Cytochrome b-c1 complex subunit Rieske, mitochondrial from Zea mays (Maize).